The sequence spans 138 residues: Integration host factor subunit beta (138 aa).

Residues 81–98 show a composition bias toward basic and acidic residues; the sequence is KAGKELRERVDRSLERQG. Residues 81–138 form a disordered region; the sequence is KAGKELRERVDRSLERQGDSSSEGEPVSLTAVKAARQAGGHHAAGFPAEATPTLVMSR.

The protein belongs to the bacterial histone-like protein family. In terms of assembly, heterodimer of an alpha and a beta chain.

Its function is as follows. This protein is one of the two subunits of integration host factor, a specific DNA-binding protein that functions in genetic recombination as well as in transcriptional and translational control. The sequence is that of Integration host factor subunit beta from Ralstonia nicotianae (strain ATCC BAA-1114 / GMI1000) (Ralstonia solanacearum).